Here is a 255-residue protein sequence, read N- to C-terminus: Uridylate kinase (255 aa).

Residue 22–25 (KLSG) participates in ATP binding. Positions 30 to 35 (GNGGYG) are involved in allosteric activation by GTP. A UMP-binding site is contributed by G64. The ATP site is built by G65 and R69. UMP-binding positions include D85 and 146 to 153 (TGNPFFTT). Residues N174, Y180, and D183 each coordinate ATP.

The protein belongs to the UMP kinase family. As to quaternary structure, homohexamer.

Its subcellular location is the cytoplasm. The catalysed reaction is UMP + ATP = UDP + ADP. The protein operates within pyrimidine metabolism; CTP biosynthesis via de novo pathway; UDP from UMP (UMPK route): step 1/1. With respect to regulation, allosterically activated by GTP. Inhibited by UTP. Its function is as follows. Catalyzes the reversible phosphorylation of UMP to UDP. This Rubrobacter xylanophilus (strain DSM 9941 / JCM 11954 / NBRC 16129 / PRD-1) protein is Uridylate kinase.